A 76-amino-acid polypeptide reads, in one-letter code: MQLALAAKYIGASIATLGLGGAAIGIALVFVALINGTSRNPSLRSTLFPQAILGFALSEACGLFCLMISFLLLYAV.

Helical transmembrane passes span Ile-14–Ile-34 and Ile-52–Leu-72.

It belongs to the ATPase C chain family. In terms of assembly, F-type ATPases have 2 components, CF(1) - the catalytic core - and CF(0) - the membrane proton channel. CF(1) has five subunits: alpha(3), beta(3), gamma(1), delta(1), epsilon(1). CF(0) has three main subunits: a, b and c.

It is found in the mitochondrion membrane. Mitochondrial membrane ATP synthase (F(1)F(0) ATP synthase or Complex V) produces ATP from ADP in the presence of a proton gradient across the membrane which is generated by electron transport complexes of the respiratory chain. F-type ATPases consist of two structural domains, F(1) - containing the extramembraneous catalytic core and F(0) - containing the membrane proton channel, linked together by a central stalk and a peripheral stalk. During catalysis, ATP synthesis in the catalytic domain of F(1) is coupled via a rotary mechanism of the central stalk subunits to proton translocation. Part of the complex F(0) domain. A homomeric c-ring of probably 10 subunits is part of the complex rotary element. The chain is ATP synthase subunit 9, mitochondrial (ATP9) from Candida albicans (strain SC5314 / ATCC MYA-2876) (Yeast).